A 560-amino-acid polypeptide reads, in one-letter code: MKTTKLLIPTQKEAPNDAKIISHQLMIRAGLISKLALGLYSYLPIGIRVLQKVENIIRQEMNKSGAQEVLMPIVQPAELWKESGRWNKYGAELLRFIDRHQREFCLGPTHEEVITHLARQYLRSYKQLPMNFYQIQTKFRDEIRPRFGVIRMREFIMKDAYSFHIDEASLQETYEVMYKTYCNIFNRLGLNYRIVLADSGSIGGNTSHEFHVLADSGEDTICFSDKSDYAANIEKVTFFKQEKTCQSTMVESKVLTKEKTSIEDVSKFLNVKKVNCVKILIIKIKDGFKALALRGDHELNEIKIHNLFGDFEFSTNNEIKNLGLKKGFIGIKNLDIDLIVDYSASVLCDFVCGANECDYHLIGVNWQGIKFIDADLRNAVDGDYSPDGKGKLMIKRGIEVGHIFQLGTKYSSVMKANVIGESGKAVTTTMGCYGIGVTRIIAAFIEQNHDDKGIIFSQAIAPFQIVIVPINYNKSTRVKALADRLYQQFIKASIDVLLDDRKEHVGIMFADSELLGIPHRIVISDTHADNGSVEYKARNKTNKIEVKFDDALSFIQTKMI.

The protein belongs to the class-II aminoacyl-tRNA synthetase family. ProS type 1 subfamily. As to quaternary structure, homodimer.

It localises to the cytoplasm. It catalyses the reaction tRNA(Pro) + L-proline + ATP = L-prolyl-tRNA(Pro) + AMP + diphosphate. Its function is as follows. Catalyzes the attachment of proline to tRNA(Pro) in a two-step reaction: proline is first activated by ATP to form Pro-AMP and then transferred to the acceptor end of tRNA(Pro). As ProRS can inadvertently accommodate and process non-cognate amino acids such as alanine and cysteine, to avoid such errors it has two additional distinct editing activities against alanine. One activity is designated as 'pretransfer' editing and involves the tRNA(Pro)-independent hydrolysis of activated Ala-AMP. The other activity is designated 'posttransfer' editing and involves deacylation of mischarged Ala-tRNA(Pro). The misacylated Cys-tRNA(Pro) is not edited by ProRS. The polypeptide is Proline--tRNA ligase (Vesicomyosocius okutanii subsp. Calyptogena okutanii (strain HA)).